A 102-amino-acid polypeptide reads, in one-letter code: ATP-dependent Clp protease adapter protein ClpS (102 aa).

Belongs to the ClpS family. As to quaternary structure, binds to the N-terminal domain of the chaperone ClpA.

In terms of biological role, involved in the modulation of the specificity of the ClpAP-mediated ATP-dependent protein degradation. The chain is ATP-dependent Clp protease adapter protein ClpS from Shewanella halifaxensis (strain HAW-EB4).